Reading from the N-terminus, the 393-residue chain is NAD(P)H-quinone oxidoreductase subunit H, chloroplastic (393 aa).

Belongs to the complex I 49 kDa subunit family. In terms of assembly, NDH is composed of at least 16 different subunits, 5 of which are encoded in the nucleus.

The protein localises to the plastid. It is found in the chloroplast thylakoid membrane. The enzyme catalyses a plastoquinone + NADH + (n+1) H(+)(in) = a plastoquinol + NAD(+) + n H(+)(out). It catalyses the reaction a plastoquinone + NADPH + (n+1) H(+)(in) = a plastoquinol + NADP(+) + n H(+)(out). Functionally, NDH shuttles electrons from NAD(P)H:plastoquinone, via FMN and iron-sulfur (Fe-S) centers, to quinones in the photosynthetic chain and possibly in a chloroplast respiratory chain. The immediate electron acceptor for the enzyme in this species is believed to be plastoquinone. Couples the redox reaction to proton translocation, and thus conserves the redox energy in a proton gradient. The protein is NAD(P)H-quinone oxidoreductase subunit H, chloroplastic of Fagopyrum esculentum subsp. ancestrale (Wild buckwheat).